Here is a 230-residue protein sequence, read N- to C-terminus: Flagellar L-ring protein (230 aa).

An N-terminal signal peptide occupies residues 1–22 (MSPISNFARIALACTVAALLGG). Cys23 is lipidated: N-palmitoyl cysteine. Cys23 carries the S-diacylglycerol cysteine lipid modification.

It belongs to the FlgH family. The basal body constitutes a major portion of the flagellar organelle and consists of four rings (L,P,S, and M) mounted on a central rod.

The protein localises to the cell outer membrane. Its subcellular location is the bacterial flagellum basal body. Assembles around the rod to form the L-ring and probably protects the motor/basal body from shearing forces during rotation. This is Flagellar L-ring protein from Stenotrophomonas maltophilia (strain K279a).